A 128-amino-acid chain; its full sequence is Calcitonin gene-related peptide 1 (128 aa).

The signal sequence occupies residues Met-1–Ala-25. Positions Ala-26–Gln-80 are excised as a propeptide. Cys-84 and Cys-89 are oxidised to a cystine. At Phe-119 the chain carries Phenylalanine amide. The propeptide occupies Asp-125–Ala-128.

Belongs to the calcitonin family. In terms of tissue distribution, expressed in spinal cord.

It localises to the secreted. Functionally, CGRP1/CALCA is a peptide hormone that induces vasodilation mediated by the CALCRL-RAMP1 receptor complex. Dilates a variety of vessels including the coronary, cerebral and systemic vasculature. Its abundance in the CNS also points toward a neurotransmitter or neuromodulator role. It also elevates platelet cAMP. CGRP1 can also bind and activate CALCR-RAMP1 (AMYR1) receptor complex. The protein is Calcitonin gene-related peptide 1 of Homo sapiens (Human).